Consider the following 148-residue polypeptide: Vascular endothelial growth factor homolog (148 aa).

Positions 1–25 (MKLTATLQVVVALLICMYNLPECVS) are cleaved as a signal peptide. 3 cysteine pairs are disulfide-bonded: C46-C88, C77-C130, and C81-C132. N-linked (GlcNAc...) asparagine; by host glycosylation is present at N95.

It belongs to the PDGF/VEGF growth factor family. In terms of assembly, homodimer; disulfide-linked.

It localises to the secreted. In terms of biological role, induces endothelial proliferation. The polypeptide is Vascular endothelial growth factor homolog (Orf virus (strain NZ7) (OV NZ-7)).